The chain runs to 1232 residues: Dynactin subunit 1 (1232 aa).

Positions 31–73 constitute a CAP-Gly domain; the sequence is GATLFATGKWVGVILDDSKGKNDGTVQGRRYFTCEENHGIFVR. 2 disordered regions span residues 82–183 and 339–358; these read DGAD…AQVK and SASE…KKNT. Positions 86–95 are enriched in low complexity; it reads TTSPETPEPT. The segment covering 108 to 117 has biased composition (polar residues); it reads PKSSKLPTRP. A compositionally biased stretch (low complexity) spans 118–130; the sequence is SSSAASSGTASAS. Positions 133–144 are enriched in polar residues; the sequence is EISSSEPSTPAQ. A compositionally biased stretch (low complexity) spans 146 to 163; that stretch reads PLAAPIIPSPSSAITSPV. Coiled coils occupy residues 170 to 505, 908 to 1005, 1046 to 1071, and 1136 to 1166; these read GPSK…KEQQ, ETVI…RTIE, LLLQ…LKAH, and AAQL…ETVS. A compositionally biased stretch (basic and acidic residues) spans 172-183; it reads SKEEENLRAQVK.

Belongs to the dynactin 150 kDa subunit family. As to quaternary structure, monomer and homodimer. Subunit of dynactin, a multiprotein complex part of a tripartite complex with dynein and a adapter, such as BICDL1, BICD2 or HOOK3. The dynactin complex is built around ACTR1A/ACTB filament and consists of an actin-related filament composed of a shoulder domain, a pointed end and a barbed end. Its length is defined by its flexible shoulder domain. The soulder is composed of 2 DCTN1 subunits, 4 DCTN2 and 2 DCTN3. DCTN1/p150(glued) binds directly to microtubules and to cytoplasmic dynein.

The protein resides in the cytoplasm. Its subcellular location is the cytoskeleton. The protein localises to the microtubule organizing center. It is found in the centrosome. It localises to the centriole. The protein resides in the spindle. Its subcellular location is the cell cortex. Part of the dynactin complex that activates the molecular motor dynein for ultra-processive transport along microtubules. Plays a key role in dynein-mediated retrograde transport of vesicles and organelles along microtubules by recruiting and tethering dynein to microtubules. Binds to both dynein and microtubules providing a link between specific cargos, microtubules and dynein. Essential for targeting dynein to microtubule plus ends, recruiting dynein to membranous cargos and enhancing dynein processivity (the ability to move along a microtubule for a long distance without falling off the track). Can also act as a brake to slow the dynein motor during motility along the microtubule. Can regulate microtubule stability by promoting microtubule formation, nucleation and polymerization and by inhibiting microtubule catastrophe in neurons. Inhibits microtubule catastrophe by binding both to microtubules and to tubulin, leading to enhanced microtubule stability along the axon. Plays a role in metaphase spindle orientation. Plays a role in centriole cohesion and subdistal appendage organization and function. Its recruitment to the centriole in a KIF3A-dependent manner is essential for the maintenance of centriole cohesion and the formation of subdistal appendage. Also required for microtubule anchoring at the mother centriole. Plays a role in primary cilia formation. This is Dynactin subunit 1 (dctn1) from Xenopus laevis (African clawed frog).